We begin with the raw amino-acid sequence, 318 residues long: Small ribosomal subunit protein uS3 (318 aa).

The KH type-2 domain maps to 17 to 86 (MDEYFAEQLS…NPQIDAQEVK (70 aa)). Positions 198 to 229 (SVEVEEPAEKPAEKPAEKPAEKAAAPKKEAAK) are enriched in basic and acidic residues. The disordered stretch occupies residues 198–275 (SVEVEEPAEK…VQAETSEEIE (78 aa)). The span at 234–250 (APAPEAPAPAPEAPAPA) shows a compositional bias: pro residues. Residues 253–275 (EEAEVAEPEEAEEVQAETSEEIE) show a composition bias toward acidic residues.

The protein belongs to the universal ribosomal protein uS3 family. As to quaternary structure, part of the 30S ribosomal subunit.

Binds the lower part of the 30S subunit head. This Methanosarcina acetivorans (strain ATCC 35395 / DSM 2834 / JCM 12185 / C2A) protein is Small ribosomal subunit protein uS3.